A 170-amino-acid polypeptide reads, in one-letter code: Protein SprT (170 aa).

A SprT-like domain is found at 23-164 (QLARQHFSVE…CRQCGDKLKF (142 aa)). His-78 is a Zn(2+) binding site. Glu-79 is an active-site residue. His-82 is a Zn(2+) binding site.

This sequence belongs to the SprT family. Requires Zn(2+) as cofactor.

It localises to the cytoplasm. This Serratia proteamaculans (strain 568) protein is Protein SprT.